The sequence spans 147 residues: D-aminoacyl-tRNA deacylase (147 aa).

A Gly-cisPro motif, important for rejection of L-amino acids motif is present at residues 138–139 (GP).

Belongs to the DTD family. In terms of assembly, homodimer.

The protein localises to the cytoplasm. The enzyme catalyses glycyl-tRNA(Ala) + H2O = tRNA(Ala) + glycine + H(+). The catalysed reaction is a D-aminoacyl-tRNA + H2O = a tRNA + a D-alpha-amino acid + H(+). An aminoacyl-tRNA editing enzyme that deacylates mischarged D-aminoacyl-tRNAs. Also deacylates mischarged glycyl-tRNA(Ala), protecting cells against glycine mischarging by AlaRS. Acts via tRNA-based rather than protein-based catalysis; rejects L-amino acids rather than detecting D-amino acids in the active site. By recycling D-aminoacyl-tRNA to D-amino acids and free tRNA molecules, this enzyme counteracts the toxicity associated with the formation of D-aminoacyl-tRNA entities in vivo and helps enforce protein L-homochirality. The protein is D-aminoacyl-tRNA deacylase of Prosthecochloris aestuarii (strain DSM 271 / SK 413).